Here is a 272-residue protein sequence, read N- to C-terminus: Phosphatidylglycerol--prolipoprotein diacylglyceryl transferase (272 aa).

The next 4 helical transmembrane spans lie at 16-36 (VGLHLSWYGILFSLGIFLSSF), 62-82 (FALGALLAIIIGARLAYVLFY), 97-117 (IWKGGLSSHGAVISVVIWAAV), and 129-149 (LSVTYICDLCGAVFGCAALLI). An a 1,2-diacyl-sn-glycero-3-phospho-(1'-sn-glycerol)-binding site is contributed by Arg150. 2 helical membrane passes run 206 to 226 (GVIRLGSGYSAAGALIGVAVI) and 246 to 266 (ILTIGQWLSIPMIFLGVGIIW).

It belongs to the Lgt family.

The protein resides in the cell inner membrane. The catalysed reaction is L-cysteinyl-[prolipoprotein] + a 1,2-diacyl-sn-glycero-3-phospho-(1'-sn-glycerol) = an S-1,2-diacyl-sn-glyceryl-L-cysteinyl-[prolipoprotein] + sn-glycerol 1-phosphate + H(+). Its pathway is protein modification; lipoprotein biosynthesis (diacylglyceryl transfer). Its function is as follows. Catalyzes the transfer of the diacylglyceryl group from phosphatidylglycerol to the sulfhydryl group of the N-terminal cysteine of a prolipoprotein, the first step in the formation of mature lipoproteins. In Chlamydia trachomatis serovar D (strain ATCC VR-885 / DSM 19411 / UW-3/Cx), this protein is Phosphatidylglycerol--prolipoprotein diacylglyceryl transferase.